The sequence spans 530 residues: Ubiquitin carboxyl-terminal hydrolase 17-like protein 24 (530 aa).

The region spanning 80 to 375 (AGLQNMGNTC…QAYVLFYIQK (296 aa)) is the USP domain. Cysteine 89 functions as the Nucleophile in the catalytic mechanism. Histidine 334 acts as the Proton acceptor in catalysis. 2 stretches are compositionally biased toward basic and acidic residues: residues 382 to 392 (SESVSRGREPR) and 398 to 412 (DTDR…KRDH). Disordered stretches follow at residues 382 to 412 (SESV…KRDH) and 477 to 530 (NHHP…LVCQ). The segment covering 493-505 (TPTHQESMNTGTL) has biased composition (polar residues). Positions 510-524 (GRARRSKGKNKHSKR) are enriched in basic residues.

The protein belongs to the peptidase C19 family. USP17 subfamily. Expressed in heart, brain, liver and skeletal muscle.

It localises to the nucleus. Its subcellular location is the nucleolus. The protein resides in the endoplasmic reticulum. The catalysed reaction is Thiol-dependent hydrolysis of ester, thioester, amide, peptide and isopeptide bonds formed by the C-terminal Gly of ubiquitin (a 76-residue protein attached to proteins as an intracellular targeting signal).. Its function is as follows. Deubiquitinating enzyme that removes conjugated ubiquitin from specific proteins to regulate different cellular processes that may include cell proliferation, progression through the cell cycle, apoptosis, cell migration, and the cellular response to viral infection. The polypeptide is Ubiquitin carboxyl-terminal hydrolase 17-like protein 24 (USP17L24) (Homo sapiens (Human)).